Reading from the N-terminus, the 448-residue chain is Tubulin beta chain (448 aa).

Residues glutamine 11, glutamate 69, serine 138, glycine 142, threonine 143, glycine 144, asparagine 204, and asparagine 226 each contribute to the GTP site. Glutamate 69 contacts Mg(2+). A disordered region spans residues 426-448; sequence QDAGIDEEEEEYEEEAPVDEPLE. The span at 429-448 shows a compositional bias: acidic residues; the sequence is GIDEEEEEYEEEAPVDEPLE.

The protein belongs to the tubulin family. As to quaternary structure, dimer of alpha and beta chains. A typical microtubule is a hollow water-filled tube with an outer diameter of 25 nm and an inner diameter of 15 nM. Alpha-beta heterodimers associate head-to-tail to form protofilaments running lengthwise along the microtubule wall with the beta-tubulin subunit facing the microtubule plus end conferring a structural polarity. Microtubules usually have 13 protofilaments but different protofilament numbers can be found in some organisms and specialized cells. Mg(2+) is required as a cofactor.

The protein localises to the cytoplasm. The protein resides in the cytoskeleton. Functionally, tubulin is the major constituent of microtubules, a cylinder consisting of laterally associated linear protofilaments composed of alpha- and beta-tubulin heterodimers. Microtubules grow by the addition of GTP-tubulin dimers to the microtubule end, where a stabilizing cap forms. Below the cap, tubulin dimers are in GDP-bound state, owing to GTPase activity of alpha-tubulin. In Epichloe coenophiala (Tall fescue endophyte fungus), this protein is Tubulin beta chain (TUB2).